The primary structure comprises 826 residues: Ribonucleases P/MRP protein subunit POP1 (826 aa).

Disordered regions lie at residues 1–24 and 49–91; these read MATT…PRKI and NKDF…SGGD. A Nuclear localization signal motif is present at residues 58 to 65; sequence KRRRTNSY. Over residues 70–79 the composition is skewed to basic residues; that stretch reads AKKRNIKRQK.

As to quaternary structure, component of nuclear RNase P and RNase MRP ribonucleoproteins. RNase P consists of a catalytic RNA moiety and different protein chains. Several subunits of RNase P are also part of the RNase MRP complex. RNase MRP consists of a catalytic RNA moiety and several protein subunits.

It localises to the nucleus. It is found in the nucleolus. Component of ribonuclease P, a ribonucleoprotein complex that generates mature tRNA molecules by cleaving their 5'-ends. Also a component of the MRP ribonuclease complex, which cleaves pre-rRNA sequences. Required for rRNA maturation, including 5.8S rRNA processing. In Arabidopsis thaliana (Mouse-ear cress), this protein is Ribonucleases P/MRP protein subunit POP1.